A 637-amino-acid polypeptide reads, in one-letter code: 3D-(3,5/4)-trihydroxycyclohexane-1,2-dione hydrolase (637 aa).

Thiamine diphosphate is bound at residue glutamate 66. The interval 442-522 is thiamine pyrophosphate binding; sequence SLPGDLQRLW…INVLLFDNSG (81 aa). The Mg(2+) site is built by aspartate 493 and asparagine 520.

It belongs to the TPP enzyme family. Mg(2+) is required as a cofactor. The cofactor is thiamine diphosphate.

The catalysed reaction is 3D-3,5/4-trihydroxycyclohexane-1,2-dione + H2O = 5-deoxy-D-glucuronate + H(+). Its pathway is polyol metabolism; myo-inositol degradation into acetyl-CoA; acetyl-CoA from myo-inositol: step 3/7. Involved in the cleavage of the C1-C2 bond of 3D-(3,5/4)-trihydroxycyclohexane-1,2-dione (THcHDO) to yield 5-deoxy-glucuronate (5DG). This chain is 3D-(3,5/4)-trihydroxycyclohexane-1,2-dione hydrolase, found in Bacillus velezensis (strain DSM 23117 / BGSC 10A6 / LMG 26770 / FZB42) (Bacillus amyloliquefaciens subsp. plantarum).